The primary structure comprises 249 residues: Hydroxyacylglutathione hydrolase (249 aa).

The Zn(2+) site is built by His54, His56, Asp58, His59, His113, Asp138, and His176.

The protein belongs to the metallo-beta-lactamase superfamily. Glyoxalase II family. As to quaternary structure, monomer. Zn(2+) serves as cofactor.

The enzyme catalyses an S-(2-hydroxyacyl)glutathione + H2O = a 2-hydroxy carboxylate + glutathione + H(+). The protein operates within secondary metabolite metabolism; methylglyoxal degradation; (R)-lactate from methylglyoxal: step 2/2. In terms of biological role, thiolesterase that catalyzes the hydrolysis of S-D-lactoyl-glutathione to form glutathione and D-lactic acid. The polypeptide is Hydroxyacylglutathione hydrolase (Synechococcus sp. (strain CC9605)).